Reading from the N-terminus, the 149-residue chain is 3-dehydroquinate dehydratase (149 aa).

Catalysis depends on Tyr-26, which acts as the Proton acceptor. Residues Asn-77, His-83, and Asp-90 each coordinate substrate. Catalysis depends on His-103, which acts as the Proton donor. Substrate contacts are provided by residues 104–105 (LS) and Arg-114.

The protein belongs to the type-II 3-dehydroquinase family. As to quaternary structure, homododecamer.

It carries out the reaction 3-dehydroquinate = 3-dehydroshikimate + H2O. Its pathway is metabolic intermediate biosynthesis; chorismate biosynthesis; chorismate from D-erythrose 4-phosphate and phosphoenolpyruvate: step 3/7. Functionally, catalyzes a trans-dehydration via an enolate intermediate. In Aliivibrio fischeri (strain MJ11) (Vibrio fischeri), this protein is 3-dehydroquinate dehydratase.